The primary structure comprises 250 residues: N-acetylmuramoyl-L-alanine amidase CwlH (250 aa).

A signal peptide spans 1 to 44 (MVTIKKDFIPVSNDNRPGYAMAPAYITVHNTANTAKGADAKMHA). The region spanning 45-141 (KFVKNPNTSE…KKWSGKECPR (97 aa)) is the N-acetylmuramoyl-L-alanine amidase domain.

The protein belongs to the N-acetylmuramoyl-L-alanine amidase 2 family.

It localises to the secreted. The enzyme catalyses Hydrolyzes the link between N-acetylmuramoyl residues and L-amino acid residues in certain cell-wall glycopeptides.. Its function is as follows. Autolysins are involved in some important biological processes such as cell separation, cell-wall turnover, competence for genetic transformation, formation of the flagella and sporulation. Could play a role in mother cell lysis with CwlC. In Bacillus subtilis (strain 168), this protein is N-acetylmuramoyl-L-alanine amidase CwlH (cwlH).